The sequence spans 293 residues: Ribonuclease HIII (293 aa).

Positions 78–293 constitute an RNase H type-2 domain; the sequence is LPLIGTDEVG…TEKAKKRLER (216 aa). Aspartate 84, glutamate 85, and aspartate 187 together coordinate a divalent metal cation.

This sequence belongs to the RNase HII family. RnhC subfamily. It depends on Mn(2+) as a cofactor. The cofactor is Mg(2+).

Its subcellular location is the cytoplasm. The enzyme catalyses Endonucleolytic cleavage to 5'-phosphomonoester.. In terms of biological role, endonuclease that specifically degrades the RNA of RNA-DNA hybrids. The chain is Ribonuclease HIII from Streptococcus pneumoniae (strain Taiwan19F-14).